The following is a 149-amino-acid chain: SsrA-binding protein (149 aa).

Residues 123-149 (KQFDKRETEKQRDWQREKARIMKGGKE) form a disordered region.

Belongs to the SmpB family.

It localises to the cytoplasm. Functionally, required for rescue of stalled ribosomes mediated by trans-translation. Binds to transfer-messenger RNA (tmRNA), required for stable association of tmRNA with ribosomes. tmRNA and SmpB together mimic tRNA shape, replacing the anticodon stem-loop with SmpB. tmRNA is encoded by the ssrA gene; the 2 termini fold to resemble tRNA(Ala) and it encodes a 'tag peptide', a short internal open reading frame. During trans-translation Ala-aminoacylated tmRNA acts like a tRNA, entering the A-site of stalled ribosomes, displacing the stalled mRNA. The ribosome then switches to translate the ORF on the tmRNA; the nascent peptide is terminated with the 'tag peptide' encoded by the tmRNA and targeted for degradation. The ribosome is freed to recommence translation, which seems to be the essential function of trans-translation. This chain is SsrA-binding protein, found in Cupriavidus taiwanensis (strain DSM 17343 / BCRC 17206 / CCUG 44338 / CIP 107171 / LMG 19424 / R1) (Ralstonia taiwanensis (strain LMG 19424)).